The chain runs to 186 residues: Ribosome-recycling factor (186 aa).

It belongs to the RRF family.

The protein resides in the cytoplasm. In terms of biological role, responsible for the release of ribosomes from messenger RNA at the termination of protein biosynthesis. May increase the efficiency of translation by recycling ribosomes from one round of translation to another. This Rickettsia africae (strain ESF-5) protein is Ribosome-recycling factor.